The chain runs to 282 residues: Shikimate dehydrogenase (NADP(+)) (282 aa).

Shikimate contacts are provided by residues 15 to 17 and Thr-62; that span reads SKS. Lys-66 (proton acceptor) is an active-site residue. The shikimate site is built by Asn-87 and Asp-103. NADP(+) is bound by residues 127 to 131, 151 to 156, and Met-220; these read GAGGA and NRTHTK. Shikimate is bound at residue Tyr-222. Gly-244 is an NADP(+) binding site.

Belongs to the shikimate dehydrogenase family. Homodimer.

The enzyme catalyses shikimate + NADP(+) = 3-dehydroshikimate + NADPH + H(+). It functions in the pathway metabolic intermediate biosynthesis; chorismate biosynthesis; chorismate from D-erythrose 4-phosphate and phosphoenolpyruvate: step 4/7. Involved in the biosynthesis of the chorismate, which leads to the biosynthesis of aromatic amino acids. Catalyzes the reversible NADPH linked reduction of 3-dehydroshikimate (DHSA) to yield shikimate (SA). The chain is Shikimate dehydrogenase (NADP(+)) from Shewanella baltica (strain OS223).